Here is a 208-residue protein sequence, read N- to C-terminus: Ras-related protein Rab-6B (208 aa).

Residues 20–27 (GEQSVGKT), Thr45, 68–72 (DTAGQ), and 126–129 (NKTD) contribute to the GTP site. Residues 42–50 (YQATIGIDF) carry the Effector region motif. S-geranylgeranyl cysteine attachment occurs at residues Cys206 and Cys208. Cys208 carries the cysteine methyl ester modification.

It belongs to the small GTPase superfamily. Rab family. In terms of assembly, interacts (GTP-bound) with BICD1 (via C-terminus); the interaction is direct. Interacts (GDP-bound) with DYNLRB1. Interacts (GTP-bound) with APBA1/MINT1. Interacts (GTP-bound) with VPS13B.

It localises to the golgi apparatus membrane. It is found in the endoplasmic reticulum-Golgi intermediate compartment. Its subcellular location is the cytoplasmic vesicle. The enzyme catalyses GTP + H2O = GDP + phosphate + H(+). Regulated by guanine nucleotide exchange factors (GEFs) which promote the exchange of bound GDP for free GTP, GTPase activating proteins (GAPs) which increase the GTP hydrolysis activity, and GDP dissociation inhibitors which inhibit the dissociation of the nucleotide from the GTPase. The small GTPases Rab are key regulators of intracellular membrane trafficking, from the formation of transport vesicles to their fusion with membranes. Rabs cycle between active GTP-bound and inactive GDP-bound states. In their active state, drive transport of vesicular carriers from donor organelles to acceptor organelles to regulate the membrane traffic that maintains organelle identity and morphology. Recruits VPS13B to the Golgi membrane. Regulates the compacted morphology of the Golgi. Seems to have a role in retrograde membrane traffic at the level of the Golgi complex. May function in retrograde transport in neuronal cells. Plays a role in neuron projection development. The sequence is that of Ras-related protein Rab-6B (RAB6B) from Bos taurus (Bovine).